Here is a 255-residue protein sequence, read N- to C-terminus: H-2 class II histocompatibility antigen, E-U alpha chain (255 aa).

The N-terminal stretch at 1–25 (MATIGALLLRFFFIAVLMSSQKSWA) is a signal peptide. The interval 26 to 109 (IKEEHTIIQA…KRSNNTPDAN (84 aa)) is alpha-1. Over 26-217 (IKEEHTIIQA…KTLLPETKEN (192 aa)) the chain is Extracellular. The interval 110-203 (VAPEVTVLSR…GLEEPLRKHW (94 aa)) is alpha-2. The region spanning 112–204 (PEVTVLSRSP…LEEPLRKHWE (93 aa)) is the Ig-like C1-type domain. A disulfide bridge links cysteine 132 with cysteine 188. N-linked (GlcNAc...) asparagine glycosylation is present at asparagine 143. The connecting peptide stretch occupies residues 204 to 216 (EFEEKTLLPETKE). A helical transmembrane segment spans residues 218-238 (VVCALGLFVGLVGIVVGIILI). Over 239 to 255 (MKGIKKRNVVERRQGAL) the chain is Cytoplasmic.

It belongs to the MHC class II family.

The protein localises to the membrane. This Mus musculus (Mouse) protein is H-2 class II histocompatibility antigen, E-U alpha chain (H2-Ea).